We begin with the raw amino-acid sequence, 541 residues long: Carboxypeptidase Y homolog A (541 aa).

An N-terminal signal peptide occupies residues 1–17 (MKLLMTGLLASAAVAAA). Residues 18–122 (QEQQVLQAEG…KLQSYDLRVK (105 aa)) constitute a propeptide that is removed on maturation. 5 disulfide bridges follow: cysteine 177–cysteine 417, cysteine 311–cysteine 325, cysteine 335–cysteine 358, cysteine 342–cysteine 351, and cysteine 380–cysteine 387. N-linked (GlcNAc...) asparagine glycosylation occurs at asparagine 208. The active site involves serine 264. The active site involves aspartate 456. N-linked (GlcNAc...) asparagine glycosylation occurs at asparagine 507. Histidine 518 is an active-site residue.

This sequence belongs to the peptidase S10 family.

It is found in the vacuole. The enzyme catalyses Release of a C-terminal amino acid with broad specificity.. Its function is as follows. Vacuolar carboxypeptidase involved in degradation of small peptides. Digests preferentially peptides containing an aliphatic or hydrophobic residue in P1' position, as well as methionine, leucine or phenylalanine in P1 position of ester substrate. The polypeptide is Carboxypeptidase Y homolog A (CPYA) (Arthroderma otae (strain ATCC MYA-4605 / CBS 113480) (Microsporum canis)).